The following is a 159-amino-acid chain: Cyclic pyranopterin monophosphate synthase (159 aa).

Residues 75–77 (LCH) and 113–114 (ME) contribute to the substrate site. Residue D128 is part of the active site.

This sequence belongs to the MoaC family. In terms of assembly, homohexamer; trimer of dimers.

The catalysed reaction is (8S)-3',8-cyclo-7,8-dihydroguanosine 5'-triphosphate = cyclic pyranopterin phosphate + diphosphate. It participates in cofactor biosynthesis; molybdopterin biosynthesis. Catalyzes the conversion of (8S)-3',8-cyclo-7,8-dihydroguanosine 5'-triphosphate to cyclic pyranopterin monophosphate (cPMP). In Cereibacter sphaeroides (strain ATCC 17023 / DSM 158 / JCM 6121 / CCUG 31486 / LMG 2827 / NBRC 12203 / NCIMB 8253 / ATH 2.4.1.) (Rhodobacter sphaeroides), this protein is Cyclic pyranopterin monophosphate synthase.